Consider the following 419-residue polypeptide: MQISDAWIRKVFTGRGDVTVEVELTVEDSVTGDVLVTRAAAPAGASRGAHEVLYFPEGGVDAALAAFEKLVAPEIVGLDVTEPYSTDGKLEEVDGTQRFEKIGGAVAIATSFAAAEAGAASLGVPLYSFIGGAYARRLPLPLGNVIGGGKHSRGLGPDIQEFLAMPLNPPDIYTAVYTNVEIHKRVLKYILKVDTSFTGGKNDEGAWTPRISSTTALKILREAAREVSGELGVEVGIGVDVAASSLWNGEKYVYKNEGVERDPREQFEFIAKLIEEYDLVYVEDPFHEEDFQSFAELRDRFKDRLIVGDDLFVTNPERIKKGGKIGAATGVIIKPDQIGTLLRAHQAVSAAREFGMRVIVSHRSGDTEYKTLAHIAVGFGAEVIKTGIMGGERTAKLNELIRIGDYLGKWATITQIRIH.

Gln-160 is a binding site for (2R)-2-phosphoglycerate. Glu-204 acts as the Proton donor in catalysis. The Mg(2+) site is built by Asp-240, Glu-283, and Asp-309. (2R)-2-phosphoglycerate-binding residues include Lys-334, Arg-363, Ser-364, and Lys-385. The Proton acceptor role is filled by Lys-334.

It belongs to the enolase family. Requires Mg(2+) as cofactor.

Its subcellular location is the cytoplasm. It localises to the secreted. It is found in the cell surface. It carries out the reaction (2R)-2-phosphoglycerate = phosphoenolpyruvate + H2O. It participates in carbohydrate degradation; glycolysis; pyruvate from D-glyceraldehyde 3-phosphate: step 4/5. Its function is as follows. Catalyzes the reversible conversion of 2-phosphoglycerate (2-PG) into phosphoenolpyruvate (PEP). It is essential for the degradation of carbohydrates via glycolysis. The sequence is that of Enolase from Pyrobaculum aerophilum (strain ATCC 51768 / DSM 7523 / JCM 9630 / CIP 104966 / NBRC 100827 / IM2).